The primary structure comprises 366 residues: MFEINPVKNRIQDLSDRTAVLRGYLCDYDAKKERLEEVNAELEQPDVWNEPERAQALGKERSTLEEIVTTIDQLEQGLEDVSGLLELAVEADDEETFNETIAELEVLDGKLGQLEFRRMFSGEYDRANCYLDLQAGSGGTEAQDWASMLLRMYLRWAESRGFKTEIIEESDGDVAGLKSATVKIIGEYAFGWLRTETGVHRLVRKSPFDSGGRRHTSFSSAFVYPEVDDDIDIEINPADLRIDVYRASGAGGQHVNKTESAVRITHIPTNIVTQCQNDRSQHKNKDQAMKQLKAKLYEFEMQKKNADKQVLEDNKSDIGWGSQIRSYVLDDSRIKDLRTGVETRNTQAVLDGDLDKFIEASLKAGL.

Gln-253 is modified (N5-methylglutamine).

It belongs to the prokaryotic/mitochondrial release factor family. Methylated by PrmC. Methylation increases the termination efficiency of RF2.

The protein resides in the cytoplasm. Its function is as follows. Peptide chain release factor 2 directs the termination of translation in response to the peptide chain termination codons UGA and UAA. The protein is Peptide chain release factor 2 of Yersinia pestis.